The primary structure comprises 427 residues: Trigger factor (427 aa).

One can recognise a PPIase FKBP-type domain in the interval 163 to 248 (GDTVILDFEG…LHEIKTKEVP (86 aa)).

The protein belongs to the FKBP-type PPIase family. Tig subfamily.

Its subcellular location is the cytoplasm. It carries out the reaction [protein]-peptidylproline (omega=180) = [protein]-peptidylproline (omega=0). Involved in protein export. Acts as a chaperone by maintaining the newly synthesized protein in an open conformation. Functions as a peptidyl-prolyl cis-trans isomerase. The protein is Trigger factor of Listeria monocytogenes serotype 4b (strain CLIP80459).